Reading from the N-terminus, the 235-residue chain is uncharacterized protein (235 aa).

A helical transmembrane segment spans residues 27–47 (AMKLWSTWITLLILTFFCSEC). The region spanning 124 to 185 (YFWGESKYVP…CCGYDCCSNS (62 aa)) is the CX domain. The chain crosses the membrane as a helical span at residues 187–207 (IFTSIFSLLVILLIVSVLSIF).

The protein resides in the membrane. This is an uncharacterized protein from Caenorhabditis elegans.